A 104-amino-acid chain; its full sequence is Pyrimidine/purine nucleoside phosphorylase (104 aa).

Belongs to the nucleoside phosphorylase PpnP family.

The catalysed reaction is a purine D-ribonucleoside + phosphate = a purine nucleobase + alpha-D-ribose 1-phosphate. The enzyme catalyses adenosine + phosphate = alpha-D-ribose 1-phosphate + adenine. It catalyses the reaction cytidine + phosphate = cytosine + alpha-D-ribose 1-phosphate. It carries out the reaction guanosine + phosphate = alpha-D-ribose 1-phosphate + guanine. The catalysed reaction is inosine + phosphate = alpha-D-ribose 1-phosphate + hypoxanthine. The enzyme catalyses thymidine + phosphate = 2-deoxy-alpha-D-ribose 1-phosphate + thymine. It catalyses the reaction uridine + phosphate = alpha-D-ribose 1-phosphate + uracil. It carries out the reaction xanthosine + phosphate = alpha-D-ribose 1-phosphate + xanthine. Its function is as follows. Catalyzes the phosphorolysis of diverse nucleosides, yielding D-ribose 1-phosphate and the respective free bases. Can use uridine, adenosine, guanosine, cytidine, thymidine, inosine and xanthosine as substrates. Also catalyzes the reverse reactions. The sequence is that of Pyrimidine/purine nucleoside phosphorylase from Geobacter sulfurreducens (strain ATCC 51573 / DSM 12127 / PCA).